Reading from the N-terminus, the 433-residue chain is ATP-dependent RNA helicase SUB2 (433 aa).

A Q motif motif is present at residues 49–77; that stretch reads TGFRDFLLKPELLRAIGDCGFEHPSEVQQ. The Helicase ATP-binding domain maps to 80–255; that stretch reads IPQSILGTDV…KKFMQNPLEI (176 aa). 93 to 100 contributes to the ATP binding site; that stretch reads AKSGLGKT. Residues 202-205 carry the DEAD box motif; the sequence is DECD. Residues 267-428 form the Helicase C-terminal domain; that stretch reads GLQQYYIKLE…EFPEEGVDPS (162 aa).

Belongs to the DEAD box helicase family. DECD subfamily.

The protein resides in the nucleus. It carries out the reaction ATP + H2O = ADP + phosphate + H(+). Its function is as follows. ATP-binding RNA helicase involved in transcription elongation and required for the export of mRNA out of the nucleus. SUB2 also plays a role in pre-mRNA splicing and spliceosome assembly. May be involved in rDNA and telomeric silencing, and maintenance of genome integrity. This is ATP-dependent RNA helicase SUB2 (SUB2) from Scheffersomyces stipitis (strain ATCC 58785 / CBS 6054 / NBRC 10063 / NRRL Y-11545) (Yeast).